Here is a 185-residue protein sequence, read N- to C-terminus: Ribosome-recycling factor (185 aa).

The protein belongs to the RRF family.

The protein localises to the cytoplasm. In terms of biological role, responsible for the release of ribosomes from messenger RNA at the termination of protein biosynthesis. May increase the efficiency of translation by recycling ribosomes from one round of translation to another. This is Ribosome-recycling factor from Thermus thermophilus (strain ATCC BAA-163 / DSM 7039 / HB27).